Consider the following 114-residue polypeptide: Macrophage migration inhibitory factor homolog (114 aa).

P2 functions as the Proton acceptor; via imino nitrogen in the catalytic mechanism. Residues K33 and N98 each coordinate substrate.

This sequence belongs to the MIF family.

It localises to the secreted. The enzyme catalyses L-dopachrome = 5,6-dihydroxyindole-2-carboxylate. It catalyses the reaction 3-phenylpyruvate = enol-phenylpyruvate. Its function is as follows. Tautomerization of the methyl ester of L-dopachrome. Inhibits migration of human peripheral blood mononuclear cells. The polypeptide is Macrophage migration inhibitory factor homolog (Trichuris trichiura (Whipworm)).